Consider the following 232-residue polypeptide: Sugar fermentation stimulation protein homolog (232 aa).

This sequence belongs to the SfsA family.

The chain is Sugar fermentation stimulation protein homolog from Ruegeria sp. (strain TM1040) (Silicibacter sp.).